A 91-amino-acid polypeptide reads, in one-letter code: ATP synthase subunit c (91 aa).

Helical transmembrane passes span 4 to 24 (LTMC…GTGI) and 53 to 73 (IGLA…LIIL).

It belongs to the ATPase C chain family. As to quaternary structure, F-type ATPases have 2 components, F(1) - the catalytic core - and F(0) - the membrane proton channel. F(1) has five subunits: alpha(3), beta(3), gamma(1), delta(1), epsilon(1). F(0) has three main subunits: a(1), b(2) and c(10-14). The alpha and beta chains form an alternating ring which encloses part of the gamma chain. F(1) is attached to F(0) by a central stalk formed by the gamma and epsilon chains, while a peripheral stalk is formed by the delta and b chains.

Its subcellular location is the cell inner membrane. In terms of biological role, f(1)F(0) ATP synthase produces ATP from ADP in the presence of a proton or sodium gradient. F-type ATPases consist of two structural domains, F(1) containing the extramembraneous catalytic core and F(0) containing the membrane proton channel, linked together by a central stalk and a peripheral stalk. During catalysis, ATP synthesis in the catalytic domain of F(1) is coupled via a rotary mechanism of the central stalk subunits to proton translocation. Its function is as follows. Key component of the F(0) channel; it plays a direct role in translocation across the membrane. A homomeric c-ring of between 10-14 subunits forms the central stalk rotor element with the F(1) delta and epsilon subunits. In Geobacter metallireducens (strain ATCC 53774 / DSM 7210 / GS-15), this protein is ATP synthase subunit c.